Consider the following 234-residue polypeptide: Uridylate kinase (234 aa).

Residue 9 to 12 (KLSG) participates in ATP binding. G51 lines the UMP pocket. Residues G52 and R56 each coordinate ATP. Residues D71 and 132–139 (CGNPFFTT) each bind UMP. ATP-binding residues include T159, Y165, and D168.

It belongs to the UMP kinase family. As to quaternary structure, homohexamer.

The protein resides in the cytoplasm. The catalysed reaction is UMP + ATP = UDP + ADP. The protein operates within pyrimidine metabolism; CTP biosynthesis via de novo pathway; UDP from UMP (UMPK route): step 1/1. Its activity is regulated as follows. Inhibited by UTP. In terms of biological role, catalyzes the reversible phosphorylation of UMP to UDP. This Prochlorococcus marinus (strain MIT 9312) protein is Uridylate kinase.